The sequence spans 476 residues: MTPGYPLALSLAVSMAVLGSALPAQARQDDPSLFNRQARGELSEYGGARRVEQDLTQALKQSLSKKKAKNVILLIGDGMGDSEITVARNYARGAGGYFKGIDALPLTGQYTHYSLHKDSGLPDYVTDSAASATAWTTGVKSYNGAIGVDIHEQPHRNLLELAKLNGKATGNVSTAELQDATPAALLAHVTARKCYGPEATSKQCPSNALENGGAGSITEQWLKTRPDVVLGGGAATFAETAKAGRYAGKTLRAQAEARGYRIVENLDELKAVRRANQKQPLIGLFAPGNMPVRWLGPTATYHGNLNQPAVSCEANPKRTADIPTLAQMTSKAIELLKDNPNGFFLQVEGASIDKQDHAANPCGQIGETVDLDEAVQKALAFAKADGETLVIVTADHAHSSQIIPPETAAPGLTQLLTTKDGAPLAISYGNSEEGSQEHTGTQLRIAAYGPQAANVTGLTDQTDLFFTIRRALNLRD.

A signal peptide spans 1 to 26 (MTPGYPLALSLAVSMAVLGSALPAQA). Asp77 lines the Mg(2+) pocket. Asp77 serves as a coordination point for Zn(2+). Catalysis depends on Ser128, which acts as the Phosphoserine intermediate. At Ser128 the chain carries Phosphoserine. Asp179 and Thr181 together coordinate Mg(2+). Ser206 carries the post-translational modification Phosphoserine. A Mg(2+)-binding site is contributed by Gln346. Positions 353, 357, 395, 396, and 438 each coordinate Zn(2+).

The protein belongs to the alkaline phosphatase family. Mg(2+) is required as a cofactor. Requires Zn(2+) as cofactor.

Its subcellular location is the secreted. The protein resides in the periplasm. It carries out the reaction a phosphate monoester + H2O = an alcohol + phosphate. Its function is as follows. Has only phosphomonoesterase activity. The protein is Alkaline phosphatase H (phoA) of Pseudomonas aeruginosa (strain UCBPP-PA14).